We begin with the raw amino-acid sequence, 96 residues long: Large ribosomal subunit protein bL21 (96 aa).

This sequence belongs to the bacterial ribosomal protein bL21 family. In terms of assembly, part of the 50S ribosomal subunit. Contacts protein L20.

In terms of biological role, this protein binds to 23S rRNA in the presence of protein L20. This Sulfurihydrogenibium sp. (strain YO3AOP1) protein is Large ribosomal subunit protein bL21.